A 443-amino-acid polypeptide reads, in one-letter code: Tubulin beta chain (443 aa).

Positions 11, 69, 138, 142, 143, 144, 204, and 226 each coordinate GTP. Glu-69 is a binding site for Mg(2+).

The protein belongs to the tubulin family. In terms of assembly, dimer of alpha and beta chains. A typical microtubule is a hollow water-filled tube with an outer diameter of 25 nm and an inner diameter of 15 nM. Alpha-beta heterodimers associate head-to-tail to form protofilaments running lengthwise along the microtubule wall with the beta-tubulin subunit facing the microtubule plus end conferring a structural polarity. Microtubules usually have 13 protofilaments but different protofilament numbers can be found in some organisms and specialized cells. The cofactor is Mg(2+).

The protein localises to the cytoplasm. Its subcellular location is the cytoskeleton. Tubulin is the major constituent of microtubules, a cylinder consisting of laterally associated linear protofilaments composed of alpha- and beta-tubulin heterodimers. Microtubules grow by the addition of GTP-tubulin dimers to the microtubule end, where a stabilizing cap forms. Below the cap, tubulin dimers are in GDP-bound state, owing to GTPase activity of alpha-tubulin. The chain is Tubulin beta chain from Thalassiosira weissflogii (Marine diatom).